Here is a 331-residue protein sequence, read N- to C-terminus: tRNA-cytidine(32) 2-sulfurtransferase (331 aa).

Residues Met-1–Arg-31 form a disordered region. The segment covering Asp-8–Ala-23 has biased composition (low complexity). Residues Ser-71 to Ser-76 carry the PP-loop motif motif. 3 residues coordinate [4Fe-4S] cluster: Cys-146, Cys-149, and Cys-237.

It belongs to the TtcA family. As to quaternary structure, homodimer. Mg(2+) is required as a cofactor. [4Fe-4S] cluster serves as cofactor.

Its subcellular location is the cytoplasm. The enzyme catalyses cytidine(32) in tRNA + S-sulfanyl-L-cysteinyl-[cysteine desulfurase] + AH2 + ATP = 2-thiocytidine(32) in tRNA + L-cysteinyl-[cysteine desulfurase] + A + AMP + diphosphate + H(+). The protein operates within tRNA modification. Catalyzes the ATP-dependent 2-thiolation of cytidine in position 32 of tRNA, to form 2-thiocytidine (s(2)C32). The sulfur atoms are provided by the cysteine/cysteine desulfurase (IscS) system. This chain is tRNA-cytidine(32) 2-sulfurtransferase, found in Burkholderia lata (strain ATCC 17760 / DSM 23089 / LMG 22485 / NCIMB 9086 / R18194 / 383).